We begin with the raw amino-acid sequence, 287 residues long: Pyridoxal kinase PdxY (287 aa).

Residues Ser9 and 44–45 (TQ) each bind substrate. ATP contacts are provided by Asp111, Glu147, and Lys180. Asp221 lines the substrate pocket.

Belongs to the pyridoxine kinase family. PdxY subfamily. In terms of assembly, homodimer. The cofactor is Mg(2+).

The catalysed reaction is pyridoxal + ATP = pyridoxal 5'-phosphate + ADP + H(+). It participates in cofactor metabolism; pyridoxal 5'-phosphate salvage; pyridoxal 5'-phosphate from pyridoxal: step 1/1. In terms of biological role, pyridoxal kinase involved in the salvage pathway of pyridoxal 5'-phosphate (PLP). Catalyzes the phosphorylation of pyridoxal to PLP. The chain is Pyridoxal kinase PdxY from Paraburkholderia phymatum (strain DSM 17167 / CIP 108236 / LMG 21445 / STM815) (Burkholderia phymatum).